A 508-amino-acid polypeptide reads, in one-letter code: Photosystem II CP47 reaction center protein (508 aa).

6 consecutive transmembrane segments (helical) span residues 21–36, 101–115, 140–156, 203–218, 237–252, and 457–472; these read SVHLMHTALVSGWAGS, IILSGLLFLAAIWHW, GVHLFLSGALCLAFGVF, IAAGLLGLIAGGFHVL, VLSSSIAAVFWSAFVV, and SFALIFFFGHIWHGAR.

The protein belongs to the PsbB/PsbC family. PsbB subfamily. In terms of assembly, PSII is composed of 1 copy each of membrane proteins PsbA, PsbB, PsbC, PsbD, PsbE, PsbF, PsbH, PsbI, PsbJ, PsbK, PsbL, PsbM, PsbT, PsbY, PsbZ, Psb30/Ycf12, at least 3 peripheral proteins of the oxygen-evolving complex and a large number of cofactors. It forms dimeric complexes. Binds multiple chlorophylls. PSII binds additional chlorophylls, carotenoids and specific lipids. is required as a cofactor.

Its subcellular location is the plastid. The protein localises to the chloroplast thylakoid membrane. One of the components of the core complex of photosystem II (PSII). It binds chlorophyll and helps catalyze the primary light-induced photochemical processes of PSII. PSII is a light-driven water:plastoquinone oxidoreductase, using light energy to abstract electrons from H(2)O, generating O(2) and a proton gradient subsequently used for ATP formation. The chain is Photosystem II CP47 reaction center protein from Euglena gracilis.